We begin with the raw amino-acid sequence, 475 residues long: Melanopsin (475 aa).

Over 1 to 21 the chain is Extracellular; sequence MGTQHRIKVDVPDRVLYTVGS. Residues 22-42 traverse the membrane as a helical segment; that stretch reads CVLVIGSIGITGNLLVLYAFY. Residues 43–53 lie on the Cytoplasmic side of the membrane; that stretch reads SNKRLRTPANY. The chain crosses the membrane as a helical span at residues 54–74; it reads FIMNLAASDFLMSATQAPICF. At 75–90 the chain is on the extracellular side; sequence LNSMHTEWILGDIGCN. An intrachain disulfide couples Cys89 to Cys167. A helical transmembrane segment spans residues 91–111; sequence FYVFCGALFGITSMMTLLAIS. The Cytoplasmic portion of the chain corresponds to 112 to 134; sequence VDRYCVITKPLQSIKRSSKKRSC. A helical transmembrane segment spans residues 135 to 155; sequence IIIAFVWLYSLGWSVCPLFGW. Residues 156 to 187 lie on the Extracellular side of the membrane; that stretch reads SSYIPEGLMISCTWDYVSYSPANRSYTMMLCC. Asn178 carries N-linked (GlcNAc...) asparagine glycosylation. Residues 188 to 208 form a helical membrane-spanning segment; it reads FVFFIPLIIIFHCYLFMFLAI. Topologically, residues 209 to 240 are cytoplasmic; that stretch reads RSTGRNVQKLGSTYNRKSNVSQSVKSEWKLAK. The helical transmembrane segment at 241–261 threads the bilayer; it reads IAFVAIVVFVLSWSPYACVTL. The Extracellular segment spans residues 262 to 276; sequence IAWAGYAKTLNPYSK. The chain crosses the membrane as a helical span at residues 277–297; the sequence is SVPAVIAKASAIYNPIIYAII. Lys284 bears the N6-(retinylidene)lysine mark. Topologically, residues 298–475 are cytoplasmic; sequence HPRYRRTIRS…EQHQMEASSH (178 aa). Disordered regions lie at residues 370-390 and 445-475; these read VEAA…KQAE and PFGL…ASSH. Basic residues predominate over residues 375 to 384; the sequence is KKQQPHRSRS. Residues 445–454 show a composition bias toward polar residues; it reads PFGLNSSSTE. A compositionally biased stretch (acidic residues) spans 455–464; the sequence is ENADTSDMEV. Positions 465 to 475 are enriched in basic and acidic residues; the sequence is QEQHQMEASSH.

The protein belongs to the G-protein coupled receptor 1 family. Opsin subfamily. Highest level in the lateral eye. Low level in the brain.

It is found in the cell membrane. Its function is as follows. Photoreceptor implicated in non-image-forming responses to light. May be able to isomerize covalently bound all-trans retinal back to 11-cis retinal. The sequence is that of Melanopsin (OPN4) from Podarcis siculus (Italian wall lizard).